Consider the following 173-residue polypeptide: MKTMLILALIALAATSVVAQLDTTCSQGYGQCQQQPQQQVNTCSALLQQCSPTPYVQSQMWQASGCQLMRQQCCQPLAQISEQARCHAVCGVAQVIMRQQQGQSFGQPQQQQGQSFSQPQQQVPIEIRRMVLQTLPSMCNVNIPQYCTTTPCSTITQTPYNVPMATTCVGGTC.

The N-terminal stretch at 1-19 (MKTMLILALIALAATSVVA) is a signal peptide.

This sequence belongs to the prolamin family. Contains 7 disulfide bonds.

In terms of biological role, seed storage protein. Not integrated in the gluten polymer through disulfide bonds, unless incorporated by reduction and reoxidation during dough making. Increases dough strength and bread volume, but decreases dough stability when added into a base wheat flour. The sequence is that of Avenin-like a5 from Triticum aestivum (Wheat).